Here is a 528-residue protein sequence, read N- to C-terminus: MVRALILDLGDVLFNWDAPASTPISRKTLGQMLHSEIWGEYERGHLTEDEAYNALAKRYSCEAKDVAHTFVLARESLRLDTKFKTFLQTLKQNANGSLRVYGMSNISKPDFEVLLGKADDWTLFDKIFPSGHVGMRKPDLAFFRYVLKDISTPVEDVVFVDDNLDNVTSARSLGMRSVLFHKKDEVQRQLTNIFGSPAERGLEYLSANKTNLQSATTTDIPIQDNFGQLLILEATEDPSLVRMEPGKRTWNFFIGSPSLTTDTFPDDLDTTSLALSIVPTSPDVVNSVIDEIISRRDKDGIVPTYFDNTRPRVDPIVCVNVLSMFAKYGREHDLPATVAWVRDVLYHRAYLGGTRYYGSAEAFLFFFTRFVRNLRPGTLKQDLHALLSERVRERLNTPVDALALSMRIQACHALGFDAPADIATLITMQDEDGGWPAAVIYKYGAGGLGITNRGVSTAFAVKAITGSPVKTETNIGGDGARAVSAMSSLEARRLQPISSVGDWVRFIIASLHVHLAWLWNVLLLSKVV.

It belongs to the HAD-like hydrolase superfamily.

It catalyses the reaction (2E,6E)-farnesyl diphosphate + H2O = (5S,9S,10S)-drim-7-en-11-ol + diphosphate. The protein operates within secondary metabolite biosynthesis; terpenoid biosynthesis. Drimenol cyclase; part of the gene cluster that mediates the biosynthesis of various drimane-type sesquiterpene esters, compounds that exhibit diverse biological activities and are widely present in eukaryotes. The pathway begins with the synthesis of the backbone drimenol by the terpene cyclase drtB using farnesyl pyrophosphate (FPP) as substrate. The cytochrome P450 monooxygenase drtD is then responsible for the hydroxylations at C-6, C-9 and C-12, as well as the oxidation of hydroxyl groups at C-6 and C-11 to a ketone and an aldehyde, respectively. Then, the biosynthesis can go in two directions, either the hydroxylated drimenol is further hydroxylated at C-2 and C-3 by an enzyme(s) not associated with the drt cluster, or the FAD-binding oxidoreductase drtC further oxidizes C-11 or C-12 to form the butyrolactone ring. DrtB, drtD and drtC are solely responsible for the formation of the different drimane structures observed during drimane sesquiterpenes biosynthesis. The polyketide synthase drtA synthesizes different lengths (C6 and C8) of PKS chains, which are then oxidized to varying degrees by the short-chain dehydrogenase drtF. Finally, these PKS chains are transferred onto drimane sesquiterpenes by the acyltransferase drtE, forming the sesquiterpene esters. In addition to the different fatty acyl-CoA chains produced by drtA, drtE is also able to use cinnamoyl-CoA as a substrate. This is Drimenol cyclase drtB from Aspergillus calidoustus.